Reading from the N-terminus, the 187-residue chain is Core-binding factor subunit beta (187 aa).

Serine 10 bears the Phosphoserine; by CK2 mark. The interval 139 to 187 (AQQAFEEARRRTREFEDRDRSHREEMEARRQQDPSPGSNLGGGDDLKLR) is disordered. Positions 144-170 (EEARRRTREFEDRDRSHREEMEARRQQ) are enriched in basic and acidic residues. Serine 159 carries the post-translational modification Phosphoserine; by PKC.

The protein belongs to the CBF-beta family. Heterodimer with RUNX1, RUNX2 and RUNX3. Interacts with COPRS. Found in a complex with PRMT5 and RUNX1. In terms of tissue distribution, expressed in all tissues tested. Highest level in thymus, but also abundantly expressed in muscle, lung and brain.

Its subcellular location is the nucleus. Functionally, forms the heterodimeric complex core-binding factor (CBF) with RUNX family proteins (RUNX1, RUNX2, and RUNX3). RUNX members modulate the transcription of their target genes through recognizing the core consensus binding sequence 5'-TGTGGT-3', or very rarely, 5'-TGCGGT-3', within their regulatory regions via their runt domain, while CBFB is a non-DNA-binding regulatory subunit that allosterically enhances the sequence-specific DNA-binding capacity of RUNX. The heterodimers bind to the core site of a number of enhancers and promoters, including murine leukemia virus, polyomavirus enhancer, T-cell receptor enhancers, LCK, IL3 and GM-CSF promoters. CBF complexes repress ZBTB7B transcription factor during cytotoxic (CD8+) T cell development. They bind to RUNX-binding sequence within the ZBTB7B locus acting as transcriptional silencer and allowing for cytotoxic T cell differentiation. This Mus musculus (Mouse) protein is Core-binding factor subunit beta (Cbfb).